Reading from the N-terminus, the 395-residue chain is Proteinase-activated receptor 2 (395 aa).

An N-terminal signal peptide occupies residues 1–25; it reads MRSPSAAWLLGGVLLLAASGSCNRT. N-linked (GlcNAc...) asparagine glycans are attached at residues asparagine 23 and asparagine 29. The propeptide at 26–34 is removed for receptor activation; sequence VPGNKSKGR. Topologically, residues 35-69 are extracellular; it reads SLIGNVDNSPVVAGRGVTVKPGFSVDEFSTSVLTG. A helical membrane pass occupies residues 70–99; the sequence is KLTTVFLPVVYTIVFVVGLPSNGMALWVFL. Over 100–106 the chain is Cytoplasmic; the sequence is FRTKKKH. Residues 107 to 135 traverse the membrane as a helical segment; sequence PAVIYMANLALADLLSVTWFPLKIAYHIH. The Extracellular segment spans residues 136 to 147; the sequence is GNNWIYGESLCK. A disulfide bridge connects residues cysteine 146 and cysteine 224. The chain crosses the membrane as a helical span at residues 148–175; sequence VLIGFFYGNMYCSILFMTCLSVQRYWVI. At 176–181 the chain is on the cytoplasmic side; it reads VNPMVH. The helical transmembrane segment at 182–209 threads the bilayer; the sequence is PKKQANIAIGVSLGIWLLILLLTIPLYV. The Extracellular segment spans residues 210 to 233; the sequence is VKQTSYIRALNITTCHDVLPEEVL. Asparagine 220 is a glycosylation site (N-linked (GlcNAc...) asparagine). A helical transmembrane segment spans residues 234–267; the sequence is VGDMFNYFLSLAIGVFLFPAFLTASAYVLMIRTL. Over 268 to 275 the chain is Cytoplasmic; it reads QSSAMDES. A helical transmembrane segment spans residues 276 to 315; that stretch reads SGKKRRRAIKLIVTVLAMYLICFTPSNLLLVVHYFLIKTR. Over 316 to 321 the chain is Extracellular; sequence GQSHVY. Residues 322 to 345 traverse the membrane as a helical segment; sequence ALYIVALCLSTLNSCIDPFVYYFI. Over 346–395 the chain is Cytoplasmic; it reads SQDFRDHAKNALLCRSVRTVKRMQVSLSSKKFSGKSSSYSSSSTSVKGSY. Cysteine 359 carries S-palmitoyl cysteine lipidation.

It belongs to the G-protein coupled receptor 1 family. As to quaternary structure, interacts with TLR4, COPS5 and TMED2. Interacts with GNAQ, GNA11, GNA12, GNA13 and GNA14. In terms of processing, a proteolytic cleavage generates a new N-terminus that functions as a tethered ligand. Activating serine proteases include trypsin, mast cell tryptase, coagulation factors VII and Xa, myeloblastin/PRTN3 and membrane-type serine protease 1/ST14. Proposed subsequent cleavage by serine proteases is leading to receptor deactivation and include neutrophil elastase and cathepsin G. At least in part, implicated proteases are also shown to activate the receptor; the glycosylation status of the receptor is thought to contribute to the difference. N-glycosylated and sialylated. Post-translationally, multiple phosphorylated on serine and threonine residues in the cytoplasmic region upon receptor activation; required for receptor desensitization and recruitment of beta-arrestin. In terms of processing, monoubiquitinated by CBL at the plasma membrane and in early endosomes; not required for receptor endocytosis but for translocation to late endosomes or lysosomes. Deubiquitination involves STAMBP and USP8; required for lysosomal trafficking and receptor degradation.

The protein resides in the cell membrane. Its function is as follows. Receptor for trypsin and trypsin-like enzymes coupled to G proteins. Its function is mediated through the activation of several signaling pathways including phospholipase C (PLC), intracellular calcium, mitogen-activated protein kinase (MAPK), I-kappaB kinase/NF-kappaB and Rho. Can also be transactivated by cleaved F2R/PAR1. Involved in modulation of inflammatory responses and regulation of innate and adaptive immunity, and acts as a sensor for proteolytic enzymes generated during infection. Generally is promoting inflammation. Can signal synergistically with TLR4 and probably TLR2 in inflammatory responses and modulates TLR3 signaling. Has a protective role in establishing the endothelial barrier; the activity involves coagulation factor X. Regulates endothelial cell barrier integrity during neutrophil extravasation, probably following proteolytic cleavage by PRTN3. Proposed to have a bronchoprotective role in airway epithelium, but also shown to compromise the airway epithelial barrier by interrupting E-cadherin adhesion. Involved in the regulation of vascular tone; activation results in hypotension presumably mediated by vasodilation. Associates with a subset of G proteins alpha subunits such as GNAQ, GNA11, GNA14, GNA12 and GNA13, but probably not with G(o) alpha, G(i) subunit alpha-1 and G(i) subunit alpha-2. Believed to be a class B receptor which internalizes as a complex with arrestin and traffic with it to endosomal vesicles, presumably as desensitized receptor, for extended periods of time. Mediates inhibition of TNF-alpha stimulated JNK phosphorylation via coupling to GNAQ and GNA11; the function involves dissociation of RIPK1 and TRADD from TNFR1. Mediates phosphorylation of nuclear factor NF-kappa-B RELA subunit at 'Ser-536'; the function involves IKBKB and is predominantly independent of G proteins. Involved in cellular migration. Involved in cytoskeletal rearrangement and chemotaxis through beta-arrestin-promoted scaffolds; the function is independent of GNAQ and GNA11 and involves promotion of cofilin dephosphorylation and actin filament severing. Induces redistribution of COPS5 from the plasma membrane to the cytosol and activation of the JNK cascade is mediated by COPS5. Involved in the recruitment of leukocytes to the sites of inflammation and is the major PAR receptor capable of modulating eosinophil function such as pro-inflammatory cytokine secretion, superoxide production and degranulation. During inflammation promotes dendritic cell maturation, trafficking to the lymph nodes and subsequent T-cell activation. Involved in antimicrobial response of innate immune cells; activation enhances phagocytosis of Gram-positive and killing of Gram-negative bacteria. Acts synergistically with interferon-gamma in enhancing antiviral responses. Probably mediates activation of pro-inflammatory and pro-fibrotic responses in fibroblasts, triggered by coagulation factor Xa (F10). Probably mediates activation of barrier protective signaling responses in endothelial cells, triggered by coagulation factor Xa (F10). In Bos taurus (Bovine), this protein is Proteinase-activated receptor 2 (F2RL1).